The primary structure comprises 350 residues: Adenine deaminase (350 aa).

Residues His24, His26, and His207 each contribute to the Zn(2+) site. Glu210 serves as the catalytic Proton donor. Asp288 contributes to the Zn(2+) binding site. Asp289 is a substrate binding site.

This sequence belongs to the metallo-dependent hydrolases superfamily. Adenosine and AMP deaminases family. Adenine deaminase type 2 subfamily. Zn(2+) is required as a cofactor.

The catalysed reaction is adenine + H2O + H(+) = hypoxanthine + NH4(+). In terms of biological role, catalyzes the hydrolytic deamination of adenine to hypoxanthine. Plays an important role in the purine salvage pathway and in nitrogen catabolism. This Paraburkholderia phytofirmans (strain DSM 17436 / LMG 22146 / PsJN) (Burkholderia phytofirmans) protein is Adenine deaminase.